Consider the following 91-residue polypeptide: Large ribosomal subunit protein uL22 (91 aa).

The protein belongs to the universal ribosomal protein uL22 family. As to quaternary structure, part of the 50S ribosomal subunit.

Its function is as follows. This protein binds specifically to 23S rRNA; its binding is stimulated by other ribosomal proteins, e.g. L4, L17, and L20. It is important during the early stages of 50S assembly. It makes multiple contacts with different domains of the 23S rRNA in the assembled 50S subunit and ribosome. Functionally, the globular domain of the protein is located near the polypeptide exit tunnel on the outside of the subunit, while an extended beta-hairpin is found that lines the wall of the exit tunnel in the center of the 70S ribosome. The chain is Large ribosomal subunit protein uL22 (rplV) from Clover yellow edge phytoplasma.